A 391-amino-acid polypeptide reads, in one-letter code: Ferrochelatase (391 aa).

Fe cation-binding residues include His196 and Glu281.

The protein belongs to the ferrochelatase family.

It localises to the cytoplasm. The catalysed reaction is heme b + 2 H(+) = protoporphyrin IX + Fe(2+). It participates in porphyrin-containing compound metabolism; protoheme biosynthesis; protoheme from protoporphyrin-IX: step 1/1. In terms of biological role, catalyzes the ferrous insertion into protoporphyrin IX. This chain is Ferrochelatase, found in Synechococcus sp. (strain CC9311).